The chain runs to 131 residues: Fluoride-specific ion channel FluC 2 (131 aa).

A run of 4 helical transmembrane segments spans residues 5–25 (FGVA…SLLV), 39–59 (LATL…TTLA), 70–90 (LAVG…AWES), and 104–124 (LYVL…RALA). Positions 78 and 81 each coordinate Na(+).

It belongs to the fluoride channel Fluc/FEX (TC 1.A.43) family.

The protein localises to the cell membrane. It carries out the reaction fluoride(in) = fluoride(out). Its activity is regulated as follows. Na(+) is not transported, but it plays an essential structural role and its presence is essential for fluoride channel function. Its function is as follows. Fluoride-specific ion channel. Important for reducing fluoride concentration in the cell, thus reducing its toxicity. The chain is Fluoride-specific ion channel FluC 2 from Deinococcus geothermalis (strain DSM 11300 / CIP 105573 / AG-3a).